We begin with the raw amino-acid sequence, 115 residues long: Tyrosine-protein phosphatase 19 (115 aa).

Positions 1-115 (WLMIVEQKCR…ETGSDAPMVV (115 aa)) constitute a Tyrosine-protein phosphatase domain. Asp83 contacts substrate.

It belongs to the protein-tyrosine phosphatase family.

The enzyme catalyses O-phospho-L-tyrosyl-[protein] + H2O = L-tyrosyl-[protein] + phosphate. This Styela plicata (Wrinkled sea squirt) protein is Tyrosine-protein phosphatase 19 (STY-19).